A 72-amino-acid chain; its full sequence is Cytochrome b-c1 complex subunit 8-1, mitochondrial (72 aa).

The Mitochondrial matrix segment spans residues 1 to 41 (MGKQPVKLKAVVYALSPFQQKIMTGLWKDLPEKIHHKVSEN). A helical membrane pass occupies residues 42–58 (WISATLLVTPVVGTYWY). At 59–72 (AQYFKEQEKLEHRF) the chain is on the mitochondrial intermembrane side.

The protein belongs to the UQCRQ/QCR8 family. As to quaternary structure, component of the ubiquinol-cytochrome c oxidoreductase (cytochrome b-c1 complex, complex III, CIII), a multisubunit enzyme composed of 10 subunits. The complex is composed of 3 respiratory subunits cytochrome b (MT-CYB), cytochrome c1 (CYC1-1 or CYC1-2) and Rieske protein (UCR1-1 or UCR1-2), 2 core protein subunits MPPalpha1 (or MPPalpha2) and MPPB, and 5 low-molecular weight protein subunits QCR7-1 (or QCR7-2), UCRQ-1 (or UCRQ-2), QCR9, UCRY and probably QCR6-1 (or QCR6-2). The complex exists as an obligatory dimer and forms supercomplexes (SCs) in the inner mitochondrial membrane with NADH-ubiquinone oxidoreductase (complex I, CI), resulting in different assemblies (supercomplexes SCI(1)III(2) and SCI(2)III(4)).

The protein resides in the mitochondrion inner membrane. Its function is as follows. Component of the ubiquinol-cytochrome c oxidoreductase, a multisubunit transmembrane complex that is part of the mitochondrial electron transport chain which drives oxidative phosphorylation. The respiratory chain contains 3 multisubunit complexes succinate dehydrogenase (complex II, CII), ubiquinol-cytochrome c oxidoreductase (cytochrome b-c1 complex, complex III, CIII) and cytochrome c oxidase (complex IV, CIV), that cooperate to transfer electrons derived from NADH and succinate to molecular oxygen, creating an electrochemical gradient over the inner membrane that drives transmembrane transport and the ATP synthase. The cytochrome b-c1 complex catalyzes electron transfer from ubiquinol to cytochrome c, linking this redox reaction to translocation of protons across the mitochondrial inner membrane, with protons being carried across the membrane as hydrogens on the quinol. In the process called Q cycle, 2 protons are consumed from the matrix, 4 protons are released into the intermembrane space and 2 electrons are passed to cytochrome c. This Arabidopsis thaliana (Mouse-ear cress) protein is Cytochrome b-c1 complex subunit 8-1, mitochondrial (UCRQ-1).